A 129-amino-acid chain; its full sequence is Large ribosomal subunit protein bL21 (129 aa).

The interval 102-129 is disordered; that stretch reads TDNAKPTKGPRPKKEKVAKEATKEDAAA. Residues 116–129 are compositionally biased toward basic and acidic residues; the sequence is EKVAKEATKEDAAA.

The protein belongs to the bacterial ribosomal protein bL21 family. In terms of assembly, part of the 50S ribosomal subunit. Contacts protein L20.

This protein binds to 23S rRNA in the presence of protein L20. The chain is Large ribosomal subunit protein bL21 from Bradyrhizobium diazoefficiens (strain JCM 10833 / BCRC 13528 / IAM 13628 / NBRC 14792 / USDA 110).